We begin with the raw amino-acid sequence, 424 residues long: Riboflavin biosynthesis protein RibBA (424 aa).

Residues 1–204 (MTRFDSIERA…IADLIAWRRK (204 aa)) form a DHBP synthase region. D-ribulose 5-phosphate-binding positions include 28 to 29 (RE), Asp33, 141 to 145 (RPGHT), and Glu165. Glu29 serves as a coordination point for Mg(2+). His144 lines the Mg(2+) pocket. The tract at residues 205-424 (HEKHVLRIAE…QNTAQPGTAL (220 aa)) is GTP cyclohydrolase II. GTP is bound at residue 259-263 (RVHSE). Zn(2+) is bound by residues Cys264, Cys275, and Cys277. Residues Gln280, 303–305 (EGR), and Thr325 each bind GTP. Asp337 acts as the Proton acceptor; for GTP cyclohydrolase activity in catalysis. Arg339 (nucleophile; for GTP cyclohydrolase activity) is an active-site residue. GTP contacts are provided by Thr360 and Lys365.

In the N-terminal section; belongs to the DHBP synthase family. The protein in the C-terminal section; belongs to the GTP cyclohydrolase II family. Mg(2+) serves as cofactor. The cofactor is Mn(2+). Zn(2+) is required as a cofactor.

It catalyses the reaction D-ribulose 5-phosphate = (2S)-2-hydroxy-3-oxobutyl phosphate + formate + H(+). The catalysed reaction is GTP + 4 H2O = 2,5-diamino-6-hydroxy-4-(5-phosphoribosylamino)-pyrimidine + formate + 2 phosphate + 3 H(+). It functions in the pathway cofactor biosynthesis; riboflavin biosynthesis; 2-hydroxy-3-oxobutyl phosphate from D-ribulose 5-phosphate: step 1/1. The protein operates within cofactor biosynthesis; riboflavin biosynthesis; 5-amino-6-(D-ribitylamino)uracil from GTP: step 1/4. Functionally, catalyzes the conversion of D-ribulose 5-phosphate to formate and 3,4-dihydroxy-2-butanone 4-phosphate. In terms of biological role, catalyzes the conversion of GTP to 2,5-diamino-6-ribosylamino-4(3H)-pyrimidinone 5'-phosphate (DARP), formate and pyrophosphate. The polypeptide is Riboflavin biosynthesis protein RibBA (Rhodococcus erythropolis (strain PR4 / NBRC 100887)).